The chain runs to 446 residues: Probable glycine dehydrogenase (decarboxylating) subunit 1 (446 aa).

This sequence belongs to the GcvP family. N-terminal subunit subfamily. As to quaternary structure, the glycine cleavage system is composed of four proteins: P, T, L and H. In this organism, the P 'protein' is a heterodimer of two subunits.

The enzyme catalyses N(6)-[(R)-lipoyl]-L-lysyl-[glycine-cleavage complex H protein] + glycine + H(+) = N(6)-[(R)-S(8)-aminomethyldihydrolipoyl]-L-lysyl-[glycine-cleavage complex H protein] + CO2. In terms of biological role, the glycine cleavage system catalyzes the degradation of glycine. The P protein binds the alpha-amino group of glycine through its pyridoxal phosphate cofactor; CO(2) is released and the remaining methylamine moiety is then transferred to the lipoamide cofactor of the H protein. This Desulfitobacterium hafniense (strain DSM 10664 / DCB-2) protein is Probable glycine dehydrogenase (decarboxylating) subunit 1.